The following is a 358-amino-acid chain: Programmed cell death protein 2-like (358 aa).

Ala-2 carries the post-translational modification N-acetylalanine. The residue at position 20 (Ser-20) is a Phosphoserine. The residue at position 22 (Thr-22) is a Phosphothreonine.

Higher expression in lung, colon, mammary gland, cervix, stomach and small intestine.

Its function is as follows. Over-expression suppresses AP1, CREB, NFAT, and NF-kB transcriptional activation, and delays cell cycle progression at S phase. This is Programmed cell death protein 2-like (PDCD2L) from Homo sapiens (Human).